A 713-amino-acid polypeptide reads, in one-letter code: Cyclomaltodextrin glucanotransferase (713 aa).

Positions 1-27 are cleaved as a signal peptide; the sequence is MKKISKLTTALALSLSLALSLLGPAHA. The tract at residues 28 to 165 is A1; the sequence is APDTSVSNKQ…NIKVIIDFAP (138 aa). The Ca(2+) site is built by Asp54, Asn56, Asn59, and Asn60. A disulfide bridge links Cys70 with Cys77. Ca(2+) is bound by residues Gly78 and Asp80. 127–128 contributes to the substrate binding site; sequence YW. Asn166 lines the Ca(2+) pocket. The b stretch occupies residues 166-229; the sequence is NHTSPASLDQ…NLYDLADLNH (64 aa). A substrate-binding site is contributed by His167. Ca(2+) is bound at residue Ile217. 220 to 223 contacts substrate; the sequence is NLYD. Ca(2+) is bound at residue Asp226. Positions 230 to 433 are A2; the sequence is NNSTVDTYLK…LRKSNPAIAY (204 aa). Arg254 is a substrate binding site. Catalysis depends on Asp256, which acts as the Nucleophile. Residue 259 to 260 coordinates substrate; it reads KH. Residue His260 coordinates Ca(2+). Glu284 acts as the Proton donor in catalysis. Substrate is bound by residues His354, Asp398, and Arg402. The interval 434 to 522 is c; the sequence is GTTQERWINN…GTAVWQYTTA (89 aa). Positions 523 to 609 are d; it reads VTAPTIGHVG…SNVHDNFEVL (87 aa). The 82-residue stretch at 526–607 folds into the IPT/TIG domain; that stretch reads PTIGHVGPMM…TSSNVHDNFE (82 aa). Residues 608-713 form the CBM20 domain; sequence VLSGDQVSVR…TATINVNWQP (106 aa). Positions 610 to 713 are e; the sequence is SGDQVSVRFV…TATINVNWQP (104 aa).

This sequence belongs to the glycosyl hydrolase 13 family. In terms of assembly, monomer. It depends on Ca(2+) as a cofactor.

Its subcellular location is the secreted. The catalysed reaction is Cyclizes part of a (1-&gt;4)-alpha-D-glucan chain by formation of a (1-&gt;4)-alpha-D-glucosidic bond.. This is Cyclomaltodextrin glucanotransferase (cgt) from Bacillus sp. (strain 17-1).